A 1445-amino-acid polypeptide reads, in one-letter code: 3'-5' RNA helicase YTHDC2 (1445 aa).

A disordered region spans residues 1–50 (MSRPSSVSPRPPAPSGGGTGGGGGGSGGGGGGGGGGPASCGPGGGGRAKG). Gly residues predominate over residues 15-48 (SGGGTGGGGGGSGGGGGGGGGGPASCGPGGGGRA). Residues 53–121 (DIRIDEEVKI…NRYLTVKKKD (69 aa)) enclose the R3H domain. A Helicase ATP-binding domain is found at 218 to 384 (VKIIKENKVV…FGSCPVIYIQ (167 aa)). An ATP-binding site is contributed by 231–238 (GETGSGKT). A DEAH box motif is present at residues 331–334 (DEVH). ANK repeat units follow at residues 521–553 (TSATALMVAAGRGFTSQVEQLISMGANVHSKAS) and 554–586 (NGWMALDWAKHFGQTEIVDLLESYSASLEFGNL). Residues 627–799 (LLYNICHSCD…ELCLHTKLLA (173 aa)) enclose the Helicase C-terminal domain. A phosphoserine mark is found at S1104, S1105, and S1107. Positions 1179–1189 (EQSAGLQQPSG) are enriched in polar residues. The interval 1179–1303 (EQSAGLQQPS…SPSPRPNMPI (125 aa)) is disordered. The segment covering 1246-1264 (KYKDRGILHPKRSTDDRSD) has biased composition (basic and acidic residues). The segment covering 1265–1279 (QSSVKSTDSSSYPSP) has biased composition (low complexity). Residues S1278, S1282, and S1296 each carry the phosphoserine modification. The 131-residue stretch at 1303–1433 (IRYFIMKSSN…QVGEQLLQLW (131 aa)) folds into the YTH domain. Residues 1309–1311 (KSS), W1325, and W1375 contribute to the RNA site.

This sequence belongs to the DEAD box helicase family. DEAH subfamily. Interacts with MEIOC; binds transcripts that regulate the mitotic cell cycle inhibiting progression into metaphase, thereby allowing meiotic prophase to proceed normally. Interacts (via ANK repeats) with XRN1. Interacts with ZCCHC4. Associates with the small ribosomal subunit. Interacts with RBM46. In terms of tissue distribution, present in male and female germ cells (at protein level). Highly expressed in testis. Not detected in spermatogonia next to the tubule wall but is strongly expressed in spermatocytes, suggesting that it is up-regulated in germ cells upon entry into meiosis (at protein level).

Its subcellular location is the cytoplasm. The protein resides in the perinuclear region. It carries out the reaction ATP + H2O = ADP + phosphate + H(+). Its function is as follows. 3'-5' RNA helicase that plays a key role in the male and female germline by promoting transition from mitotic to meiotic divisions in stem cells. Specifically recognizes and binds N6-methyladenosine (m6A)-containing RNAs, a modification present at internal sites of mRNAs and some non-coding RNAs that plays a role in the efficiency of RNA processing and stability. Essential for ensuring a successful progression of the meiotic program in the germline by regulating the level of m6A-containing RNAs. Acts by binding and promoting degradation of m6A-containing mRNAs: the 3'-5' RNA helicase activity is required for this process and RNA degradation may be mediated by XRN1 exoribonuclease. Required for both spermatogenesis and oogenesis. In Mus musculus (Mouse), this protein is 3'-5' RNA helicase YTHDC2.